A 142-amino-acid polypeptide reads, in one-letter code: Hemoglobin subunit zeta (142 aa).

Serine 2 is modified (N-acetylserine). The Globin domain maps to 2-142 (SLTRTERTII…VSGVLTEKYR (141 aa)). Threonine 29 is subject to Phosphothreonine. Phosphoserine is present on serine 53. A heme b-binding site is contributed by histidine 59. 2 positions are modified to phosphoserine: serine 73 and serine 82. Histidine 88 serves as a coordination point for heme b.

This sequence belongs to the globin family. In terms of assembly, heterotetramer of two zeta chains and beta-type chains.

In terms of biological role, the zeta chain is an alpha-type chain of mammalian embryonic hemoglobin. This Capra hircus (Goat) protein is Hemoglobin subunit zeta (HBZ1).